The sequence spans 300 residues: Protoheme IX farnesyltransferase (300 aa).

A run of 9 helical transmembrane segments spans residues 24–44 (VTQL…PGMV), 46–66 (WHVL…AFAI), 94–114 (PQIL…LYTF), 118–138 (LTMW…TLLL), 146–166 (IVIG…AVTG), 172–192 (AWIL…VLAL), 217–237 (LHIL…FISG), 239–259 (SGAV…AYAW), and 278–298 (IVYL…RPLL).

It belongs to the UbiA prenyltransferase family. Protoheme IX farnesyltransferase subfamily.

Its subcellular location is the cell inner membrane. It catalyses the reaction heme b + (2E,6E)-farnesyl diphosphate + H2O = Fe(II)-heme o + diphosphate. It participates in porphyrin-containing compound metabolism; heme O biosynthesis; heme O from protoheme: step 1/1. Converts heme B (protoheme IX) to heme O by substitution of the vinyl group on carbon 2 of heme B porphyrin ring with a hydroxyethyl farnesyl side group. The polypeptide is Protoheme IX farnesyltransferase (Burkholderia cenocepacia (strain HI2424)).